The following is a 24-amino-acid chain: Potassium channel toxin alpha-KTx 6 OcyKTx5 (24 aa).

Cys3 and Cys24 form a disulfide bridge.

Belongs to the short scorpion toxin superfamily. Potassium channel inhibitor family. Alpha-KTx 06 subfamily. In terms of tissue distribution, expressed by the venom gland.

It is found in the secreted. Blocks voltage-gated potassium channels. The sequence is that of Potassium channel toxin alpha-KTx 6 OcyKTx5 from Opisthacanthus cayaporum (South American scorpion).